An 82-amino-acid polypeptide reads, in one-letter code: Putative antitoxin Saci_0468 (82 aa).

It belongs to the UPF0330 family.

Its function is as follows. Possibly the antitoxin component of a type II toxin-antitoxin (TA) system. This is Putative antitoxin Saci_0468 from Sulfolobus acidocaldarius (strain ATCC 33909 / DSM 639 / JCM 8929 / NBRC 15157 / NCIMB 11770).